The sequence spans 148 residues: Large ribosomal subunit protein bL9 (148 aa).

It belongs to the bacterial ribosomal protein bL9 family.

Functionally, binds to the 23S rRNA. This Syntrophobacter fumaroxidans (strain DSM 10017 / MPOB) protein is Large ribosomal subunit protein bL9.